A 2897-amino-acid chain; its full sequence is Chromodomain-helicase-DNA-binding protein 9 (2897 aa).

Residues 173-201 (QCTSLRSQQNRNNLNPGQNSLSQSKNFMN) show a composition bias toward polar residues. Disordered regions lie at residues 173 to 265 (QCTS…CSVS), 482 to 525 (QRQP…KQEK), and 537 to 671 (AKER…SAPL). K197 is covalently cross-linked (Glycyl lysine isopeptide (Lys-Gly) (interchain with G-Cter in SUMO2)). The segment covering 220–235 (SNSQQSISMQQFSQTS) has biased composition (low complexity). Polar residues-rich tracts occupy residues 247-260 (HQEG…PNMT) and 484-506 (QPPS…TQVR). K499 carries the post-translational modification N6-acetyllysine. Positions 508–525 (MSEKKQRKKVESESKQEK) are enriched in basic and acidic residues. The residue at position 550 (S550) is a Phosphoserine. The segment covering 573–593 (KPKDKDSKKTKTCSKLKEKTK) has biased composition (basic and acidic residues). A Glycyl lysine isopeptide (Lys-Gly) (interchain with G-Cter in SUMO2) cross-link involves residue K596. Phosphoserine is present on S611. Positions 634-644 (RRSNRQIKRKK) are enriched in basic residues. Basic and acidic residues predominate over residues 645 to 660 (YAEDIEGKQSEEEVKG). Chromo domains lie at 690–761 (AIVD…HFFA) and 773–839 (VEVD…RLDR). Residues 868–872 (LNWLL) carry the LXXLL motif 1 motif. The Helicase ATP-binding domain occupies 872–1046 (LFNWYNRRNC…FSLLHFLEPL (175 aa)). Position 885-892 (885-892 (DEMGLGKT)) interacts with ATP. A DEAH box motif is present at residues 997–1000 (DEAH). An LXXLL motif 2 motif is present at residues 1036-1040 (LFSLL). Residues 1186–1337 (LIDKLLPKMK…KAVLQSMSGR (152 aa)) form the Helicase C-terminal domain. A disordered region spans residues 1461–1484 (KDELAELSEAESEGDEKPKLRRPC). Residues 1465–1474 (AELSEAESEG) are compositionally biased toward acidic residues. 2 positions are modified to phosphoserine: S1468 and S1472. A compositionally biased stretch (basic and acidic residues) spans 1475–1484 (DEKPKLRRPC). Glycyl lysine isopeptide (Lys-Gly) (interchain with G-Cter in SUMO2) cross-links involve residues K1588, K1738, and K1903. S2026 is subject to Phosphoserine. An LXXLL motif 3 motif is present at residues 2031-2035 (LPRLL). Residue K2038 forms a Glycyl lysine isopeptide (Lys-Gly) (interchain with G-Cter in SUMO2) linkage. Disordered regions lie at residues 2050 to 2238 (ENLK…QMNN) and 2305 to 2337 (GAAT…SKVK). Phosphoserine occurs at positions 2058 and 2059. A Glycyl lysine isopeptide (Lys-Gly) (interchain with G-Cter in SUMO2) cross-link involves residue K2074. S2075 and S2079 each carry phosphoserine. A compositionally biased stretch (basic and acidic residues) spans 2094–2104 (SGGKCETDRRM). Residues 2141-2193 (SSCSSRSSSSSSSSSCSHSRSGSSSSSSSSCSSASSSSSSSTSSSSSSSSSSS) are compositionally biased toward low complexity. Over residues 2203–2216 (AQKRESTTHMKAYD) the composition is skewed to basic and acidic residues. Residues 2221–2238 (ASLSTTQDETQDSFQMNN) are compositionally biased toward polar residues. A binds A/T-rich DNA region spans residues 2332 to 2481 (QMSKVKKHVR…LSYTQPQGIP (150 aa)). Residues K2350, K2356, and K2361 each participate in a glycyl lysine isopeptide (Lys-Gly) (interchain with G-Cter in SUMO2) cross-link. An a.T hook-like region spans residues 2429–2436 (KKRRGRRK). Residues 2721 to 2725 (LPNLL) carry the LXXLL motif 4 motif. A disordered region spans residues 2729–2777 (GLLTKPTESGTEDKKGSDSKESEGKTERTESQSSENGGENSVSSSPSTS). The segment covering 2739-2758 (TEDKKGSDSKESEGKTERTE) has biased composition (basic and acidic residues). A compositionally biased stretch (low complexity) spans 2759–2777 (SQSSENGGENSVSSSPSTS). The short motif at 2793–2797 (LNPLL) is the LXXLL motif 5 element. Residues 2827-2897 (VQNKNSDLGS…SEDSDSSNED (71 aa)) are disordered. Basic and acidic residues predominate over residues 2840–2857 (VEVKEEDSRIKDQEDKGG). A Glycyl lysine isopeptide (Lys-Gly) (interchain with G-Cter in SUMO2) cross-link involves residue K2843. Positions 2877 to 2888 (ASSGSDSTSSSS) are enriched in low complexity.

The protein belongs to the SNF2/RAD54 helicase family. In terms of assembly, interacts with PPARA. Probably interacts with ESR1 and NR1I3. Post-translationally, phosphorylated on serine and tyrosine residues. As to expression, widely expressed at low levels. In bone marrow, expression is restricted to osteoprogenitor cells adjacent to mature osteoblasts.

It localises to the cytoplasm. Its subcellular location is the nucleus. The catalysed reaction is ATP + H2O = ADP + phosphate + H(+). In terms of biological role, probable ATP-dependent chromatin-remodeling factor. Acts as a transcriptional coactivator for PPARA and possibly other nuclear receptors. Has DNA-dependent ATPase activity and binds to A/T-rich DNA. Associates with A/T-rich regulatory regions in promoters of genes that participate in the differentiation of progenitors during osteogenesis. The protein is Chromodomain-helicase-DNA-binding protein 9 (CHD9) of Homo sapiens (Human).